The following is a 353-amino-acid chain: Mitochondrial import inner membrane translocase subunit TIM50 (353 aa).

A mitochondrion-targeting transit peptide spans 1-44; that stretch reads MAASAAVFSRLRSGLRLGSRGLCTRLATPPRRAPDQAAEIGSRG. The tract at residues 25–60 is disordered; it reads RLATPPRRAPDQAAEIGSRGSTKAQGPQQQPGSEGP. Phosphoserine is present on Ser45. Residues 45 to 65 are Mitochondrial matrix-facing; that stretch reads STKAQGPQQQPGSEGPSYAKK. Positions 49 to 60 are enriched in low complexity; it reads QGPQQQPGSEGP. The chain crosses the membrane as a helical span at residues 66 to 86; it reads VALWLAGLLGAGGTVSVVYIF. The Mitochondrial intermembrane segment spans residues 87–353; the sequence is GNNPVDENGA…SRLWPRSKQP (267 aa). The 144-residue stretch at 143–286 folds into the FCP1 homology domain; the sequence is YYQPPYTLVL…LDLSAFLKTI (144 aa). Ser341 is subject to Phosphoserine.

It belongs to the TIM50 family. As to quaternary structure, component of the TIM23 complex at least composed of TIMM23, TIMM17 (TIMM17A or TIMM17B) and TIMM50; within this complex, directly interacts with TIMM23. The complex interacts with the TIMM44 component of the PAM complex and with DNAJC15. Interacts with COIL and snRNPs. Widely expressed. Expressed at higher level in brain, kidney and liver (at protein level).

It is found in the mitochondrion inner membrane. It localises to the nucleus speckle. Essential component of the TIM23 complex, a complex that mediates the translocation of transit peptide-containing proteins across the mitochondrial inner membrane. Has some phosphatase activity in vitro; however such activity may not be relevant in vivo. Its function is as follows. May participate in the release of snRNPs and SMN from the Cajal body. In Homo sapiens (Human), this protein is Mitochondrial import inner membrane translocase subunit TIM50 (TIMM50).